A 440-amino-acid polypeptide reads, in one-letter code: MESQQLSNYPHISHGSACASVTSKEVHTNQDPLDVSASKIQEYDKASTKANSQQTTTPASSAVPENPHHASPQPASVPPPQNGPYPQQCMMTQNQANPSGWSFYGHPSMIPYTPYQMSPMYFPPGPQSQFPQYPSSVGTPLSTPSPESGNTFTDSSSADSDMTSTKKYVRPPPMLTSPNDFPNWVKTYIKFLQNSNLGGIIPTVNGKPVRQITDDELTFLYNTFQIFAPSQFLPTWVKDILSVDYTDIMKILSKSIEKMQSDTQEANDIVTLANLQYNGSTPADAFETKVTNIIDRLNNNGIHINNKVACQLIMRGLSGEYKFLRYTRHRHLNMTVAELFLDIHAIYEEQQGSRNSKPNYRRNPSDEKNDSRSYTNTTKPKVIARNPQKTNNSKSKTARAHNVSTSNNSPSTDNDSISKSTTEPIQLNNKHDLHLRPGTY.

Polar residues-rich tracts occupy residues 1 to 10, 48 to 60, and 127 to 152; these read MESQQLSNYP, TKANSQQTTTPAS, and QSQFPQYPSSVGTPLSTPSPESGNTF. Disordered regions lie at residues 1-93, 126-173, and 352-440; these read MESQ…MMTQ, PQSQ…RPPP, and GSRN…PGTY. A compositionally biased stretch (low complexity) spans 153-165; it reads TDSSSADSDMTST. Positions 299–401 are RNA-binding; it reads NNGIHINNKV…NSKSKTARAH (103 aa). A compositionally biased stretch (low complexity) spans 402–418; the sequence is NVSTSNNSPSTDNDSIS. Phosphoserine is present on serine 416. Polar residues predominate over residues 419-428; the sequence is KSTTEPIQLN. Basic and acidic residues predominate over residues 429-440; that stretch reads NKHDLHLRPGTY.

Homotrimer.

It is found in the cytoplasm. In terms of biological role, capsid protein (CA) is the structural component of the virus-like particle (VLP), forming the shell that encapsulates the retrotransposons dimeric RNA genome. The particles are assembled from trimer-clustered units and there are holes in the capsid shells that allow for the diffusion of macromolecules. CA also has nucleocapsid-like chaperone activity, promoting primer tRNA(i)-Met annealing to the multipartite primer-binding site (PBS), dimerization of Ty1 RNA and initiation of reverse transcription. In Saccharomyces cerevisiae (strain ATCC 204508 / S288c) (Baker's yeast), this protein is Transposon Ty1-DR1 Gag polyprotein (TY1A-DR1).